The following is a 178-amino-acid chain: Outer envelope pore protein 16-2, chloroplastic (178 aa).

The tract at residues 1–102 (MEKSGGRIVM…DALVKNTGKE (102 aa)) is contains beta strands. The helical transmembrane segment at 103–119 (SLQWGLAAGLYSGITYG) threads the bilayer.

Belongs to the Tim17/Tim22/Tim23 family. Plastid outer envelope porin OEP16 (TC 1.B.30) subfamily. Homodimer and oligomers in membrane. In terms of tissue distribution, detected in pollen and seeds. Present in leaves and cotyledons.

Its subcellular location is the plastid. It is found in the chloroplast outer membrane. Its function is as follows. Voltage-dependent high-conductance channel with a slight cation-selectivity; selective for amino acids but excludes triosephosphates or uncharged sugars. Non-essential amino acid-selective channel protein and translocation pore for NADPH:protochlorophyllide oxidoreductase A (PORA) and possibly PORB. This Arabidopsis thaliana (Mouse-ear cress) protein is Outer envelope pore protein 16-2, chloroplastic (OEP162).